The sequence spans 76 residues: Acyl carrier protein (76 aa).

Positions 2-76 constitute a Carrier domain; it reads SSIFDKVKAI…SAVEYIKENQ (75 aa). An O-(pantetheine 4'-phosphoryl)serine modification is found at S36.

It belongs to the acyl carrier protein (ACP) family. 4'-phosphopantetheine is transferred from CoA to a specific serine of apo-ACP by AcpS. This modification is essential for activity because fatty acids are bound in thioester linkage to the sulfhydryl of the prosthetic group.

It is found in the cytoplasm. It functions in the pathway lipid metabolism; fatty acid biosynthesis. Its function is as follows. Carrier of the growing fatty acid chain in fatty acid biosynthesis. The sequence is that of Acyl carrier protein from Heliobacterium modesticaldum (strain ATCC 51547 / Ice1).